The primary structure comprises 308 residues: MSAQKPGLHPRNRHHHRYDLATLCQVTPELAQFLTRTPAGEQSVDFANPLAVKALNKALLAYFYQVANWDIPEGFLCPPVPGRADYIHHLADLLGETTGAIPADASVLDVGTGANCIYPLIGVHEYGWRFTGSEVHAQALASAQVIISGNPGLTRSIRLRRQKDPAAIFNGIIHKNEQYDATLCNPPFHDSAASARAGSERKRRNLGQDKNDALNFGGQQQELWCEGGEVAFIKTMIAESQAFGRQVMWFTTLVSRGENLPPLYRALTDVGAVKVVKKEMAQGQKQSRFIAWTFMDDDQRRRFMARKR.

The segment at D190–D212 is disordered.

This sequence belongs to the methyltransferase superfamily. METTL16/RlmF family.

It localises to the cytoplasm. It carries out the reaction adenosine(1618) in 23S rRNA + S-adenosyl-L-methionine = N(6)-methyladenosine(1618) in 23S rRNA + S-adenosyl-L-homocysteine + H(+). Functionally, specifically methylates the adenine in position 1618 of 23S rRNA. This Citrobacter koseri (strain ATCC BAA-895 / CDC 4225-83 / SGSC4696) protein is Ribosomal RNA large subunit methyltransferase F.